The chain runs to 362 residues: NAD(P)H-quinone oxidoreductase subunit 1, chloroplastic (362 aa).

Helical transmembrane passes span 31 to 51, 99 to 119, 132 to 152, 178 to 198, 206 to 226, 268 to 288, 303 to 323, and 336 to 356; these read WVPL…LVIV, WLFT…YLVV, IGIF…LMSG, LAIC…VDIV, ILTW…IAAL, LVSG…PFAI, AFLG…AAIL, and LLDL…LLTA.

This sequence belongs to the complex I subunit 1 family. In terms of assembly, NDH is composed of at least 16 different subunits, 5 of which are encoded in the nucleus.

Its subcellular location is the plastid. It is found in the chloroplast thylakoid membrane. It catalyses the reaction a plastoquinone + NADH + (n+1) H(+)(in) = a plastoquinol + NAD(+) + n H(+)(out). It carries out the reaction a plastoquinone + NADPH + (n+1) H(+)(in) = a plastoquinol + NADP(+) + n H(+)(out). NDH shuttles electrons from NAD(P)H:plastoquinone, via FMN and iron-sulfur (Fe-S) centers, to quinones in the photosynthetic chain and possibly in a chloroplast respiratory chain. The immediate electron acceptor for the enzyme in this species is believed to be plastoquinone. Couples the redox reaction to proton translocation, and thus conserves the redox energy in a proton gradient. The chain is NAD(P)H-quinone oxidoreductase subunit 1, chloroplastic from Nephroselmis olivacea (Green alga).